We begin with the raw amino-acid sequence, 283 residues long: 2-hydroxy-6-oxononadienedioate/2-hydroxy-6-oxononatrienedioate hydrolase (283 aa).

Positions 35 to 269 (VVVMFHGSGP…KCGHWAQWEH (235 aa)) constitute an AB hydrolase-1 domain. H263 acts as the Proton acceptor in catalysis.

It belongs to the AB hydrolase superfamily. MhpC family. In terms of assembly, homodimer.

The enzyme catalyses (2Z,4E)-2-hydroxy-6-oxonona-2,4-dienedioate + H2O = (2Z)-2-hydroxypenta-2,4-dienoate + succinate + H(+). It catalyses the reaction (2Z,4E,7E)-2-hydroxy-6-oxonona-2,4,7-trienedioate + H2O = (2Z)-2-hydroxypenta-2,4-dienoate + fumarate + H(+). Its pathway is aromatic compound metabolism; 3-phenylpropanoate degradation. In terms of biological role, catalyzes the cleavage of the C5-C6 bond of 2-hydroxy-6-oxononadienedioate and 2-hydroxy-6-oxononatrienedioate, a dienol ring fission product of the bacterial meta-cleavage pathway for degradation of phenylpropionic acid. This Pseudomonas sp protein is 2-hydroxy-6-oxononadienedioate/2-hydroxy-6-oxononatrienedioate hydrolase.